The primary structure comprises 116 residues: Anti-sigma F factor antagonist (116 aa).

One can recognise an STAS domain in the interval Leu-3–Leu-113. Position 58 is a phosphoserine (Ser-58).

Belongs to the anti-sigma-factor antagonist family. In terms of processing, phosphorylated by SpoIIAB on a serine residue.

Functionally, in the phosphorylated form it could act as an anti-anti-sigma factor that counteracts SpoIIAB and thus releases sigma f from inhibition. This chain is Anti-sigma F factor antagonist (spoIIAA), found in Heyndrickxia coagulans (Weizmannia coagulans).